The chain runs to 323 residues: tRNA N6-adenosine threonylcarbamoyltransferase (323 aa).

Residues His-110 and His-114 each coordinate Fe cation. Residues 131-135 (VASGG), Asp-164, Gly-177, and Asn-264 contribute to the substrate site. Fe cation is bound at residue Asp-288.

It belongs to the KAE1 / TsaD family. Fe(2+) is required as a cofactor.

The protein localises to the cytoplasm. It carries out the reaction L-threonylcarbamoyladenylate + adenosine(37) in tRNA = N(6)-L-threonylcarbamoyladenosine(37) in tRNA + AMP + H(+). Functionally, required for the formation of a threonylcarbamoyl group on adenosine at position 37 (t(6)A37) in tRNAs that read codons beginning with adenine. Is involved in the transfer of the threonylcarbamoyl moiety of threonylcarbamoyl-AMP (TC-AMP) to the N6 group of A37, together with TsaE and TsaB. TsaD likely plays a direct catalytic role in this reaction. The chain is tRNA N6-adenosine threonylcarbamoyltransferase from Thermus thermophilus (strain ATCC BAA-163 / DSM 7039 / HB27).